The chain runs to 256 residues: Acetyl-coenzyme A carboxylase carboxyl transferase subunit alpha (256 aa).

The 236-residue stretch at 1 to 236 (MTKITRIVRE…KQELLVELEQ (236 aa)) folds into the CoA carboxyltransferase C-terminal domain.

The protein belongs to the AccA family. In terms of assembly, acetyl-CoA carboxylase is a heterohexamer composed of biotin carboxyl carrier protein (AccB), biotin carboxylase (AccC) and two subunits each of ACCase subunit alpha (AccA) and ACCase subunit beta (AccD).

The protein resides in the cytoplasm. It catalyses the reaction N(6)-carboxybiotinyl-L-lysyl-[protein] + acetyl-CoA = N(6)-biotinyl-L-lysyl-[protein] + malonyl-CoA. Its pathway is lipid metabolism; malonyl-CoA biosynthesis; malonyl-CoA from acetyl-CoA: step 1/1. In terms of biological role, component of the acetyl coenzyme A carboxylase (ACC) complex. First, biotin carboxylase catalyzes the carboxylation of biotin on its carrier protein (BCCP) and then the CO(2) group is transferred by the carboxyltransferase to acetyl-CoA to form malonyl-CoA. This Streptococcus gordonii (strain Challis / ATCC 35105 / BCRC 15272 / CH1 / DL1 / V288) protein is Acetyl-coenzyme A carboxylase carboxyl transferase subunit alpha.